Consider the following 444-residue polypeptide: Ubiquitin carboxyl-terminal hydrolase MINDY-3 (444 aa).

Cysteine 51 (nucleophile) is an active-site residue. Residue serine 124 is modified to Phosphoserine. Histidine 286 acts as the Proton acceptor in catalysis.

It belongs to the MINDY deubiquitinase family. FAM188 subfamily. Interacts with COPS5.

Its subcellular location is the nucleus. It catalyses the reaction Thiol-dependent hydrolysis of ester, thioester, amide, peptide and isopeptide bonds formed by the C-terminal Gly of ubiquitin (a 76-residue protein attached to proteins as an intracellular targeting signal).. In terms of biological role, hydrolase that can remove 'Lys-48'-linked conjugated ubiquitin from proteins. The sequence is that of Ubiquitin carboxyl-terminal hydrolase MINDY-3 from Mus musculus (Mouse).